Reading from the N-terminus, the 450-residue chain is Divalent metal cation transporter MntH (450 aa).

11 helical membrane-spanning segments follow: residues 34-54 (LSFLGPGLLVAGGYMDSGNWI), 59-81 (GGAQYGYTLLFGNLISRLSAMLL), 108-128 (IAIIFWIIAELAIIATDIAEV), 141-161 (IPLIVGALITVLDVFLLLFIM), 170-190 (AIVGTLIFTVLFIFIFEVYIS), 212-232 (GILYIALGIIGATIMPHNLYL), 263-283 (IQLSIAFVVNCLLLVLGASLF), 305-325 (PVLGATMGAIMSTLFAVALLA), 361-381 (SLAVIPVIVCLIIFKGNAAKI), 383-403 (QLLVFSQVFLSIALPFCLIPL), and 422-442 (VNIISWTLIIILSILNVYLIV).

This sequence belongs to the NRAMP family.

The protein localises to the cell membrane. H(+)-stimulated, divalent metal cation uptake system. In Staphylococcus aureus (strain MRSA252), this protein is Divalent metal cation transporter MntH.